A 223-amino-acid polypeptide reads, in one-letter code: UPF0441 protein YgiB (223 aa).

Positions 178–195 (TVPKTAMAPKPATTTTVT) are enriched in low complexity. Residues 178 to 223 (TVPKTAMAPKPATTTTVTRGGFGESIAKQSTMQRSATGTSSRSMGG) are disordered. A compositionally biased stretch (polar residues) spans 204 to 223 (AKQSTMQRSATGTSSRSMGG).

This sequence belongs to the UPF0441 family.

The sequence is that of UPF0441 protein YgiB from Shigella boydii serotype 4 (strain Sb227).